The chain runs to 76 residues: Dolichyl-diphosphooligosaccharide--protein glycosyltransferase subunit OST5 (76 aa).

2 helical membrane-spanning segments follow: residues 14–34 and 54–74; these read FYPV…ATFI and ALIA…AGGI.

This sequence belongs to the OST5 family. As to quaternary structure, component of the oligosaccharyltransferase (OST) complex.

It localises to the membrane. Its function is as follows. Subunit of the oligosaccharyl transferase (OST) complex that catalyzes the initial transfer of a defined glycan (Glc(3)Man(9)GlcNAc(2) in eukaryotes) from the lipid carrier dolichol-pyrophosphate to an asparagine residue within an Asn-X-Ser/Thr consensus motif in nascent polypeptide chains, the first step in protein N-glycosylation. N-glycosylation occurs cotranslationally and the complex associates with the Sec61 complex at the channel-forming translocon complex that mediates protein translocation across the endoplasmic reticulum (ER). All subunits are required for a maximal enzyme activity. The protein is Dolichyl-diphosphooligosaccharide--protein glycosyltransferase subunit OST5 of Dictyostelium discoideum (Social amoeba).